Here is a 442-residue protein sequence, read N- to C-terminus: Lysosomal dipeptide transporter MFSD1 (442 aa).

Positions 8–9 match the Dileucine internalization motif motif; it reads LL. 10 helical membrane-spanning segments follow: residues 38–58, 85–105, 107–127, 187–207, 238–258, 276–296, 303–323, 333–353, 364–384, and 390–410; these read LLVL…YDNP, TVIF…GALV, AFWL…SLAV, LLIG…LAYL, LWLI…FIGL, AINS…GILV, IIWV…LAFT, LLGV…AFVV, FMQS…GMIL, and LFLE…VVML.

Belongs to the major facilitator superfamily. In terms of assembly, homodimer. Interacts with lysosomal protein GLMP (via lumenal domain); the interaction starts while both proteins are still in the endoplasmic reticulum and is required for stabilization of MFSD1 in lysosomes but has no direct effect on its targeting to lysosomes or transporter activity.

Its subcellular location is the lysosome membrane. The enzyme catalyses L-alpha-aminoacyl-L-arginine(out) = L-alpha-aminoacyl-L-arginine(in). The catalysed reaction is L-arginyl-L-alpha-amino acid(out) = L-arginyl-L-alpha-amino acid(in). It catalyses the reaction L-arginyl-glycine(out) = L-arginyl-glycine(in). It carries out the reaction L-alpha-aminoacyl-L-lysine(out) = L-alpha-aminoacyl-L-lysine(in). The enzyme catalyses L-aspartyl-L-lysine(out) = L-aspartyl-L-lysine(in). The catalysed reaction is L-alanyl-L-lysine(out) = L-alanyl-L-lysine(in). It catalyses the reaction L-lysyl-L-alpha-amino acid(out) = L-lysyl-L-alpha-amino acid(in). It carries out the reaction L-lysyl-L-alanine(out) = L-lysyl-L-alanine(in). The enzyme catalyses L-lysyl-L-lysine(out) = L-lysyl-L-lysine(in). The catalysed reaction is L-lysyl-glycine(out) = L-lysyl-glycine(in). It catalyses the reaction L-alpha-aminoacyl-L-histidine(out) = L-alpha-aminoacyl-L-histidine(in). It carries out the reaction L-histidyl-L-alpha-amino acid(out) = L-histidyl-L-alpha-amino acid(in). The enzyme catalyses L-histidyl-glycine(out) = L-histidyl-glycine(in). In terms of biological role, lysosomal dipeptide uniporter that selectively exports lysine, arginine or histidine-containing dipeptides with a net positive charge from the lysosome lumen into the cytosol. Could play a role in a specific type of protein O-glycosylation indirectly regulating macrophages migration and tissue invasion. Also essential for liver homeostasis. This Gallus gallus (Chicken) protein is Lysosomal dipeptide transporter MFSD1.